Reading from the N-terminus, the 331-residue chain is Putative peptidyl-prolyl cis-trans isomerase RC0542 (331 aa).

A disordered region spans residues 33–54 (EQTASNNSSTDENQTSINNEPP). The PPIase FKBP-type domain occupies 128–226 (GHVVTVFYQI…SNEVKIYDDE (99 aa)).

The enzyme catalyses [protein]-peptidylproline (omega=180) = [protein]-peptidylproline (omega=0). This Rickettsia conorii (strain ATCC VR-613 / Malish 7) protein is Putative peptidyl-prolyl cis-trans isomerase RC0542.